A 352-amino-acid polypeptide reads, in one-letter code: Fatty acid desaturase (352 aa).

The next 2 helical transmembrane spans lie at 28–48 and 55–75; these read SLIQ…LAYL and LLTL…FIIF. The short motif at 76-80 is the Histidine box-1 element; that stretch reads HDCCH. A helical membrane pass occupies residues 89-109; the sequence is YNHILGFLTGVLTLFPYLQWQ. The Histidine box-2 signature appears at 112-116; the sequence is HSIHH. 3 consecutive transmembrane segments (helical) span residues 151-171, 186-206, and 209-229; these read LYRN…LITN, TYLT…IFGW, and FLLV…WLFY. A Histidine box-3 motif is present at residues 274–278; sequence HHVHH.

Belongs to the fatty acid desaturase type 1 family.

It is found in the cell membrane. Its pathway is lipid metabolism; fatty acid metabolism. Catalyzes the introduction of a cis-double bond at the delta(5) position of existing saturated fatty acids attached to membrane phospholipids. It is not strictly specific for palmitic acid (C16) but can also accept C14 as well as C18 species to yield unsaturated fatty acids. This Bacillus subtilis (strain 168) protein is Fatty acid desaturase (des).